Here is a 150-residue protein sequence, read N- to C-terminus: MNVILLDKIANLGNLGDQVSVKAGYARNFLLPQGKAVVANAANTEVFEARRAELEAKLAEELAAASARAEKITALEAVVIASKAGDEGKLFGSIGNRDVADAVTAAGVELAKSEVRLPLGALRNTGDFEVEVQLHTEVKAIVKLSVVAED.

It belongs to the bacterial ribosomal protein bL9 family.

In terms of biological role, binds to the 23S rRNA. The chain is Large ribosomal subunit protein bL9 from Shewanella piezotolerans (strain WP3 / JCM 13877).